Here is a 422-residue protein sequence, read N- to C-terminus: MFVNTVIAFIIIFGTLVFFHELGHLLLAQRAGILCREFAIGFGPKIFSFKKNETVYTIRLLPVGGFVRMAGEDPEMIEVKPGYTVGLLFNKEDQVEKVIINQKEKYPDALVIEVETADLEHDMKITGYEQGKEDELSSFTVSETSFFIVDGEEVQIAPYNRQFGSKPVWQRIKAIAAGPIMNFILAYVILVMLGLIQGVPSNEPMLGQLTDNGRAAEAGLKEGDYIQSINGEKMRSWTDIVSAVKENPEKEMDVAVKRDNKTLHISVTPEAVKDENKKTIGRFGSYAPTEKGVLSAVAYGATSTVDVTKAILTNLSKLVTGQFKLDMLSGPVGIYDMTDQVAKTGIVNLFQFAAFLSINLGIVNLLPIPALDGGRLLFLFIEAIRGKPINREKEAFVVFIGVAFLMLLMLVVTWNDIQRLFL.

The next 4 helical transmembrane spans lie at 6 to 26, 175 to 195, 346 to 366, and 394 to 414; these read VIAF…GHLL, IAAG…MLGL, IVNL…VNLL, and EAFV…VVTW. Histidine 20 is a binding site for Zn(2+). Residue glutamate 21 is part of the active site. Residue histidine 24 participates in Zn(2+) binding. The PDZ domain occupies 186 to 271; the sequence is AYVILVMLGL…TLHISVTPEA (86 aa).

It belongs to the peptidase M50B family. Zn(2+) is required as a cofactor.

The protein resides in the cell membrane. Functionally, is responsible for site-2 cleavage of the RsiW anti-sigma factor. This results, after a third proteolytic step catalyzed by the ClpXP protease, in the release of SigW and the transcription activation of the genes under the control of the sigma-W factor. Can also cleave liberated signal peptides of PenP and Mpr, probably within in the cell membrane. The protein is Regulator of sigma-W protease RasP of Bacillus subtilis (strain 168).